The following is an 852-amino-acid chain: MEVSQEELTPLMRQYLRVKEQYKDAIVFFRLGDFYEMFGEDAVIASKILGITLTSRDKSKEKAIPMCGIPYFSADSYIEKLLREGYKVAICEQIGDPKTSKGIVEREVIKVLTPGTYLPEGVRENIYIMSIYPSKGKIGIALADITTGQFFLYETDKNITDEIERFEPKEILIPASFEDSLKFEISSYNKTFIEDWKFDYLLAYKTLLEHFKVASLKSYGAEEFSNAISAGGALLKYLEENKQQTEFKGIKILNLSEFMLLDASTKKNLEIFVSLDGSREGSLIWVLDETLTPMGARFLKNTLSCPLLNISEIEKRFDGIEAFCGDYLLREKLEKILKDFPDIERIALKIKGKSINPKELNSLKNALKRIPELREVLRNKTEILNSLYNSLYELNELVTKIENALTENPPPVITEGGIFRDGYNSTIDELRALRTESKKYILNMEAEERKKTGINSLKIGYNRVFGYYIEVTKPNLHLVPSHYIRKQTLANAERFITEELKELELKIMSAEEKLKILEQELFIELVNSILPFTDKILNNGETIGFIDFLLSLAKVASKYNYVRPEINEEDIIEIKDGRHPVIERLIQLGKLYEGRFIPNDLLIGPADQRIIILTGPNMAGKSTYMRQNALIVLMAQIGSFVPAKYAKIGIVDRIFTRIGASDYLAKGQSTFMVEMIETANILNNATPKSFIILDEVGRGTSTFDGISIAWSVVEYIAEKIKARTLFATHYHELTDLAFNLDCIKNFTVVVKEWGDEIIFLRKIQEGGADKSYGIQVARLAGLPLEILNRAREILHRLEKKEFQVFPIRARQLDLFFQGDPIKAELSKIDIDSLNPQKALKKLKELKEMLKND.

Position 615–622 (615–622 (GPNMAGKS)) interacts with ATP.

It belongs to the DNA mismatch repair MutS family.

This protein is involved in the repair of mismatches in DNA. It is possible that it carries out the mismatch recognition step. This protein has a weak ATPase activity. The protein is DNA mismatch repair protein MutS of Thermodesulfovibrio yellowstonii (strain ATCC 51303 / DSM 11347 / YP87).